The chain runs to 415 residues: MAFNKLSIENLDLAGKRVLMRVDFNVPIKEGKITSNQRIVAALDSIKLALSKKAKSVVLMSHLGRPDGNKNIKYTLAPVAAELKTLLGQDVIFLSDCVGSEVEAACKDPAPGSVILLENVRFYVEEEGKGLDASGGKVKADPAKVKEFRASLAKLGDVYVNDAFGTAHRAHSSMMGDGFEQRAAGLLLNKELKYFSQALDKPPNPFLAILGGAKVADKIQLIENLLDKVNEMIIGGGMAFTFLKVLNNMKIGGSLFDEEGSKIVEKLVEKAKKNNVQLHLPVDFVCGDKFAENAAVSEATVEAGIPDGHMGLDVGPKTRELFAAPIARAKLIVWNGPPGVFEFPNFANGTKSIMDGVVAATKNGTVSIIGGGDTASCCAKWNTEALVSHVSTGGGASLELLEGKTLPGVAALTSA.

(2R)-3-phosphoglycerate-binding residues include Val22, Asp23, Phe24, Asn25, Gln37, Arg38, Ser61, His62, Gly64, Arg65, Arg121, His168, and Arg169. An ADP-binding site is contributed by Gly212. Position 212 (Gly212) interacts with CDP. Residues Ala213 and Lys214 each coordinate AMP. Ala213 is a binding site for ATP. Position 213 (Ala213) interacts with Mg(2+). Mg(2+) is bound by residues Ala216 and Asp217. A CDP-binding site is contributed by Asp217. Lys218 is an AMP binding site. Lys218 lines the ATP pocket. Residue Gly236 coordinates ADP. Gly236 provides a ligand contact to CDP. AMP-binding residues include Gly237 and Gly311. 2 residues coordinate ATP: Gly237 and Gly311. Positions 336 and 341 each coordinate CDP. Position 341 (Phe341) interacts with ADP. Glu342 contributes to the AMP binding site. ATP-binding residues include Glu342, Asp373, and Thr374. Asp373 lines the Mg(2+) pocket.

The protein belongs to the phosphoglycerate kinase family. As to quaternary structure, monomer. Requires Mg(2+) as cofactor.

Its subcellular location is the cytoplasm. It carries out the reaction (2R)-3-phosphoglycerate + ATP = (2R)-3-phospho-glyceroyl phosphate + ADP. The protein operates within carbohydrate degradation; glycolysis; pyruvate from D-glyceraldehyde 3-phosphate: step 2/5. Its function is as follows. Enzyme of the glycolytic pathway. Glycolysis is essential in glial cells but not in neurons; neurons rely on the citric acid cycle for their energy needs, and on lactate and alanine secreted into the hemolymph by glial cells to fuel it. The sequence is that of Phosphoglycerate kinase from Drosophila melanogaster (Fruit fly).